Here is a 739-residue protein sequence, read N- to C-terminus: Long-chain-fatty-acid--CoA ligase ACSBG2 (739 aa).

ATP is bound by residues 287–295 (TSGTTGQPK), 478–483 (ELYGMS), Asp-556, Arg-571, and Lys-684.

This sequence belongs to the ATP-dependent AMP-binding enzyme family. Bubblegum subfamily.

It is found in the cytoplasm. It carries out the reaction a long-chain fatty acid + ATP + CoA = a long-chain fatty acyl-CoA + AMP + diphosphate. It catalyses the reaction (5Z,8Z,11Z,14Z)-eicosatetraenoate + ATP + CoA = (5Z,8Z,11Z,14Z)-eicosatetraenoyl-CoA + AMP + diphosphate. The catalysed reaction is hexadecanoate + ATP + CoA = hexadecanoyl-CoA + AMP + diphosphate. The enzyme catalyses (9Z)-octadecenoate + ATP + CoA = (9Z)-octadecenoyl-CoA + AMP + diphosphate. It carries out the reaction (9Z,12Z)-octadecadienoate + ATP + CoA = (9Z,12Z)-octadecadienoyl-CoA + AMP + diphosphate. It catalyses the reaction tetracosanoate + ATP + CoA = tetracosanoyl-CoA + AMP + diphosphate. Functionally, catalyzes the conversion of fatty acids such as long chain and very long-chain fatty acids to their active form acyl-CoAs for both synthesis of cellular lipids, and degradation via beta-oxidation. Can activate diverse saturated, monosaturated and polyunsaturated fatty acids. The protein is Long-chain-fatty-acid--CoA ligase ACSBG2 of Xenopus laevis (African clawed frog).